A 339-amino-acid polypeptide reads, in one-letter code: NmrA-like family domain-containing oxidoreductase notA (339 aa).

NADP(+) contacts are provided by residues 13-18 (GATGAQ), 39-43 (RKPDS), 60-61 (DG), 81-83 (TNS), K140, and 164-167 (YMGI).

It belongs to the NmrA-type oxidoreductase family.

NmrA-like family domain-containing oxidoreductase; part of the gene cluster that mediates the biosynthesis of notoamide, a fungal indole alkaloid that belongs to a family of natural products containing a characteristic bicyclo[2.2.2]diazaoctane core. The first step of notoamide biosynthesis involves coupling of L-proline and L-tryptophan by the bimodular NRPS notE, to produce cyclo-L-tryptophan-L-proline called brevianamide F. The reverse prenyltransferase notF then acts as a deoxybrevianamide E synthase and converts brevianamide F to deoxybrevianamide E via reverse prenylation at C-2 of the indole ring leading to the bicyclo[2.2.2]diazaoctane core. Deoxybrevianamide E is further hydroxylated at C-6 of the indole ring, likely catalyzed by the cytochrome P450 monooxygenase notG, to yield 6-hydroxy-deoxybrevianamide E. 6-hydroxy-deoxybrevianamide E is a specific substrate of the prenyltransferase notC for normal prenylation at C-7 to produce 6-hydroxy-7-prenyl-deoxybrevianamide, also called notoamide S. As the proposed pivotal branching point in notoamide biosynthesis, notoamide S can be diverted to notoamide E through an oxidative pyran ring closure putatively catalyzed by either notH cytochrome P450 monooxygenase or the notD FAD-linked oxidoreductase. This step would be followed by an indole 2,3-epoxidation-initiated pinacol-like rearrangement catalyzed by the notB FAD-dependent monooxygenase leading to the formation of notoamide C and notoamide D. On the other hand notoamide S is converted to notoamide T by notH (or notD), a bifunctional oxidase that also functions as the intramolecular Diels-Alderase responsible for generation of (+)-notoamide T. To generate antipodal (-)-notoaminide T, notH' (or notD') in Aspergillus versicolor is expected to catalyze a Diels-Alder reaction leading to the opposite stereochemistry. The remaining oxidoreductase notD (or notH) likely catalyzes the oxidative pyran ring formation to yield (+)-stephacidin A. The FAD-dependent monooxygenase notI is highly similar to notB and is predicted to catalyze a similar conversion from (+)-stephacidin A to (-)-notoamide B via the 2,3-epoxidation of (+)-stephacidin A followed by a pinacol-type rearrangement. Finally, it remains unclear which enzyme could be responsible for the final hydroxylation steps leading to notoamide A and sclerotiamide. The protein is NmrA-like family domain-containing oxidoreductase notA of Aspergillus sp. (strain MF297-2).